A 437-amino-acid polypeptide reads, in one-letter code: MIKPVGSDELKPLFVYDPEEHHKLSHEAESLPSVVISSQGPRVSSMMGAGYFSPAGFMNVADAMGAAEKMTLSDGSSSCSVLCLLENTDAIGDAKRIALRDPNVEGNPVLAVMDIEAIEEVSDEQMAVMTDKVYRTTDMDHIGVKTFNSQGRVAVSGPIQVLNFSYFQADFPDTFRTAVEIRNEIKEHGWSKVVAFQTRNPMHRAHEELCRMPMESLDADGVVVHMLLGKLKKGDIPAPVRDAAIRTMAEVYFPPNTVMVTGYGFDMLYAGPREAVLHAYFRQNMGATHFIIGREPPAWVTTTVPSTPRPSSMTKCQRAPWRSRSSCRPHGLLQEAEQDCDDARRAGSHQGRLRTALRHQGREMLGQGIAPPPEFSRPEVAKILMDLLPVHQQLILIWFSGKTRPGVGRWRVFLCAAGALWPEAVAVANMEKRSSTG.

Positions 303 to 314 are enriched in low complexity; it reads TVPSTPRPSSMT. The tract at residues 303-322 is disordered; the sequence is TVPSTPRPSSMTKCQRAPWR.

Belongs to the sulfate adenylyltransferase family.

The catalysed reaction is sulfate + ATP + H(+) = adenosine 5'-phosphosulfate + diphosphate. The protein operates within sulfur metabolism; hydrogen sulfide biosynthesis; sulfite from sulfate: step 1/3. In Riftia pachyptila sulfur-oxidizing endosymbiont, this protein is Sulfate adenylyltransferase (sat).